The following is a 65-amino-acid chain: uncharacterized protein (65 aa).

The disordered stretch occupies residues 1 to 22 (MEKETPQQETKQSTNKESGFFD). The span at 7–17 (QQETKQSTNKE) shows a compositional bias: polar residues. A coiled-coil region spans residues 22-65 (DEIIKRTNQLLEKEKELHEKYNKEITSQQDQIDQLKKKINQLKY).

This is an uncharacterized protein from Dictyostelium discoideum (Social amoeba).